We begin with the raw amino-acid sequence, 189 residues long: Transmembrane protein 229b (189 aa).

The Cytoplasmic portion of the chain corresponds to 1-17 (MATTVTPEPLTALSRWY). Residues 18-38 (LYAIHGYFCEVMFTAAWEFVV) form a helical membrane-spanning segment. The Extracellular portion of the chain corresponds to 39–43 (NCNWK). Residues 44 to 64 (FPGVTSVWALFIYGTCILIVE) form a helical membrane-spanning segment. The Cytoplasmic segment spans residues 65 to 75 (RMYLCLKDRCN). A helical transmembrane segment spans residues 76–96 (VLLRCIIYTLWTYFWEFGTGF). Over 97 to 114 (LLRQFNACPWDYSEFKYN) the chain is Extracellular. The chain crosses the membrane as a helical span at residues 115–135 (FMGLITAEYAVPWFCASFIVE). The Cytoplasmic portion of the chain corresponds to 136-189 (RLVIRNTLRLRFDEVAESGQAEERLDRGGGGRGGRRGRGARAGATSANGYVKVD). The disordered stretch occupies residues 158–189 (ERLDRGGGGRGGRRGRGARAGATSANGYVKVD).

This sequence belongs to the TMEM229 family.

The protein localises to the membrane. The polypeptide is Transmembrane protein 229b (tmem229b) (Danio rerio (Zebrafish)).